The primary structure comprises 909 residues: Nitrate reductase [NADH] (909 aa).

Residue Cys187 participates in Mo-molybdopterin binding. A Cytochrome b5 heme-binding domain is found at Ser535 to Ile610. Heme is bound by residues His570 and His593. Residues Arg652–Gln764 enclose the FAD-binding FR-type domain. FAD contacts are provided by residues Arg704 to Thr707, Val721 to Tyr725, Phe726, Phe733, Gln738 to Ser740, and Thr791.

This sequence belongs to the nitrate reductase family. In terms of assembly, homodimer. It depends on FAD as a cofactor. The cofactor is heme. Mo-molybdopterin is required as a cofactor.

The enzyme catalyses nitrite + NAD(+) + H2O = nitrate + NADH + H(+). Regulated by the nitrogen source and controlled by the circadian rhythm. In terms of biological role, nitrate reductase is a key enzyme involved in the first step of nitrate assimilation in plants, fungi and bacteria. The protein is Nitrate reductase [NADH] (NIA) of Petunia hybrida (Petunia).